The following is a 406-amino-acid chain: Serine hydroxymethyltransferase (406 aa).

(6S)-5,6,7,8-tetrahydrofolate is bound by residues L111 and 115–117; that span reads GHL. K220 carries the N6-(pyridoxal phosphate)lysine modification. 340 to 342 contributes to the (6S)-5,6,7,8-tetrahydrofolate binding site; sequence SAF.

Belongs to the SHMT family. In terms of assembly, homodimer. It depends on pyridoxal 5'-phosphate as a cofactor.

It is found in the cytoplasm. The enzyme catalyses (6R)-5,10-methylene-5,6,7,8-tetrahydrofolate + glycine + H2O = (6S)-5,6,7,8-tetrahydrofolate + L-serine. It functions in the pathway one-carbon metabolism; tetrahydrofolate interconversion. It participates in amino-acid biosynthesis; glycine biosynthesis; glycine from L-serine: step 1/1. Its function is as follows. Catalyzes the reversible interconversion of serine and glycine with tetrahydrofolate (THF) serving as the one-carbon carrier. This reaction serves as the major source of one-carbon groups required for the biosynthesis of purines, thymidylate, methionine, and other important biomolecules. Also exhibits THF-independent aldolase activity toward beta-hydroxyamino acids, producing glycine and aldehydes, via a retro-aldol mechanism. The sequence is that of Serine hydroxymethyltransferase from Mycoplasma genitalium (strain ATCC 33530 / DSM 19775 / NCTC 10195 / G37) (Mycoplasmoides genitalium).